The chain runs to 172 residues: Stellate protein CG33247 (172 aa).

The protein belongs to the casein kinase 2 subunit beta family. In terms of assembly, interacts in vitro with the casein kinase 2 alpha subunit (CkII-alpha). The relevance of such interaction is however unclear in vivo. Probably not expressed in wild-type flies. In males lacking the Y chromosome, it is testis-specific and constitutes the main component of star-shaped crystals.

Its function is as follows. Unknown. In males lacking the Y chromosome, its strong overexpression leads to the appearance of proteinaceous star-shaped crystals in the primary spermatocytes causing meiotic drive, possibly by interfering with normal casein kinase 2 activity. This Drosophila melanogaster (Fruit fly) protein is Stellate protein CG33247 (Ste:CG33247).